The chain runs to 325 residues: Beta-ketoacyl-[acyl-carrier-protein] synthase III (325 aa).

Catalysis depends on residues C112 and H250. Residues Q251–R255 are ACP-binding. N280 is a catalytic residue.

It belongs to the thiolase-like superfamily. FabH family. As to quaternary structure, homodimer.

It is found in the cytoplasm. The catalysed reaction is malonyl-[ACP] + acetyl-CoA + H(+) = 3-oxobutanoyl-[ACP] + CO2 + CoA. The protein operates within lipid metabolism; fatty acid biosynthesis. Its function is as follows. Catalyzes the condensation reaction of fatty acid synthesis by the addition to an acyl acceptor of two carbons from malonyl-ACP. Catalyzes the first condensation reaction which initiates fatty acid synthesis and may therefore play a role in governing the total rate of fatty acid production. Possesses both acetoacetyl-ACP synthase and acetyl transacylase activities. Its substrate specificity determines the biosynthesis of branched-chain and/or straight-chain of fatty acids. In Streptococcus mutans serotype c (strain ATCC 700610 / UA159), this protein is Beta-ketoacyl-[acyl-carrier-protein] synthase III.